The chain runs to 292 residues: Homoserine kinase (292 aa).

An ATP-binding site is contributed by 84–94 (PLARGMGSSSA).

Belongs to the GHMP kinase family. Homoserine kinase subfamily.

The protein localises to the cytoplasm. It carries out the reaction L-homoserine + ATP = O-phospho-L-homoserine + ADP + H(+). Its pathway is amino-acid biosynthesis; L-threonine biosynthesis; L-threonine from L-aspartate: step 4/5. Its function is as follows. Catalyzes the ATP-dependent phosphorylation of L-homoserine to L-homoserine phosphate. This is Homoserine kinase from Campylobacter lari (strain RM2100 / D67 / ATCC BAA-1060).